We begin with the raw amino-acid sequence, 77 residues long: Metallothionein-like protein type 2 (77 aa).

It belongs to the metallothionein superfamily. Type 15 family. As to expression, expressed in the left, stem and flower, at very low levels in roots and is not detectable in mesophyll protoplasts.

Functionally, metallothioneins have a high content of cysteine residues that bind various heavy metals. The polypeptide is Metallothionein-like protein type 2 (MTI) (Vicia faba (Broad bean)).